We begin with the raw amino-acid sequence, 568 residues long: Zinc finger protein 583 (568 aa).

The KRAB domain maps to 6-77 (LTFEDVSVNF…QKKGARDTCP (72 aa)). 12 C2H2-type zinc fingers span residues 211-233 (LKCS…QRIH), 239-261 (YACV…KRIH), 267-289 (YECK…QRVH), 295-317 (YQCK…QRIH), 323-345 (FECI…QRIH), 351-373 (YVCH…QRIH), 379-401 (YECK…QRVH), 407-429 (YECK…QRVH), 435-457 (YECA…QRSH), 463-485 (YICK…QRIH), 491-513 (YECN…QRIH), and 519-541 (YECK…EKVH).

This sequence belongs to the krueppel C2H2-type zinc-finger protein family.

Its subcellular location is the nucleus. May be involved in transcriptional regulation. This Mus musculus (Mouse) protein is Zinc finger protein 583 (Znf583).